The primary structure comprises 623 residues: DNA polymerase alpha subunit B (623 aa).

The disordered stretch occupies residues 113–151 (IPKIKDEPSSSVDVSTARNKNNHNNNNNNNPSLPNKSMF). Over residues 121–130 (SSSVDVSTAR) the composition is skewed to polar residues.

This sequence belongs to the DNA polymerase alpha subunit B family. In terms of assembly, DNA polymerase alpha:primase is a four subunit enzyme complex, which is assembled throughout the cell cycle, and consists of the two DNA polymerase subunits A and B, and the DNA primase large and small subunits. Subunit B binds to subunit A.

The protein localises to the nucleus. In terms of biological role, may play an essential role at the early stage of chromosomal DNA replication by coupling the polymerase alpha/primase complex to the cellular replication machinery. In Dictyostelium discoideum (Social amoeba), this protein is DNA polymerase alpha subunit B (polA2).